Consider the following 364-residue polypeptide: Dual-specificity RNA methyltransferase RlmN (364 aa).

Glu-91 serves as the catalytic Proton acceptor. The Radical SAM core domain occupies 102 to 337; the sequence is GTLRITQCLS…AIIRKSKGQD (236 aa). Cys-109 and Cys-342 are joined by a disulfide. [4Fe-4S] cluster contacts are provided by Cys-116, Cys-120, and Cys-123. Residues 169-170, Ser-201, 223-225, and Asn-299 each bind S-adenosyl-L-methionine; these read GE and SLH. Cys-342 serves as the catalytic S-methylcysteine intermediate.

This sequence belongs to the radical SAM superfamily. RlmN family. [4Fe-4S] cluster serves as cofactor.

It is found in the cytoplasm. The enzyme catalyses adenosine(2503) in 23S rRNA + 2 reduced [2Fe-2S]-[ferredoxin] + 2 S-adenosyl-L-methionine = 2-methyladenosine(2503) in 23S rRNA + 5'-deoxyadenosine + L-methionine + 2 oxidized [2Fe-2S]-[ferredoxin] + S-adenosyl-L-homocysteine. It carries out the reaction adenosine(37) in tRNA + 2 reduced [2Fe-2S]-[ferredoxin] + 2 S-adenosyl-L-methionine = 2-methyladenosine(37) in tRNA + 5'-deoxyadenosine + L-methionine + 2 oxidized [2Fe-2S]-[ferredoxin] + S-adenosyl-L-homocysteine. Specifically methylates position 2 of adenine 2503 in 23S rRNA and position 2 of adenine 37 in tRNAs. m2A2503 modification seems to play a crucial role in the proofreading step occurring at the peptidyl transferase center and thus would serve to optimize ribosomal fidelity. The chain is Dual-specificity RNA methyltransferase RlmN from Nitratidesulfovibrio vulgaris (strain DP4) (Desulfovibrio vulgaris).